Reading from the N-terminus, the 1370-residue chain is DNA-directed RNA polymerase subunit beta (1370 aa).

Belongs to the RNA polymerase beta chain family. In terms of assembly, the RNAP catalytic core consists of 2 alpha, 1 beta, 1 beta' and 1 omega subunit. When a sigma factor is associated with the core the holoenzyme is formed, which can initiate transcription.

It carries out the reaction RNA(n) + a ribonucleoside 5'-triphosphate = RNA(n+1) + diphosphate. Functionally, DNA-dependent RNA polymerase catalyzes the transcription of DNA into RNA using the four ribonucleoside triphosphates as substrates. The chain is DNA-directed RNA polymerase subunit beta from Bordetella bronchiseptica (strain ATCC BAA-588 / NCTC 13252 / RB50) (Alcaligenes bronchisepticus).